The following is a 254-amino-acid chain: MAIANKNIIFVAGLGGIGLDTSREIVKSGPKNLVILDRIDNPTAIAELKAINPKVTVTFYPYDVTVPVAETTKLLKTIFAQLKTVDLLINGAGILDDHQIERTIAVNFTGTVNTTTAIMEFWDKRKGGPGGVIANICSVTGFNAIYQVPVYSASKAAALSFTNSLARLAPITGVTAYSINPGITRTPLVHRFNSWLDVEPRVGELLLEHPTQTTLECAQNFVKAIEANKNGAIWQLDLGQLIAVEWTKHWDSHI.

Residue 10 to 33 (FVAGLGGIGLDTSREIVKSGPKNL) participates in NAD(+) binding. Ser-138 is a substrate binding site. Tyr-151 acts as the Proton acceptor in catalysis.

This sequence belongs to the short-chain dehydrogenases/reductases (SDR) family. Homodimer.

It carries out the reaction a primary alcohol + NAD(+) = an aldehyde + NADH + H(+). It catalyses the reaction a secondary alcohol + NAD(+) = a ketone + NADH + H(+). The chain is Alcohol dehydrogenase (Adh) from Drosophila flavomontana (Fruit fly).